The chain runs to 732 residues: Catalase-peroxidase (732 aa).

Residues 1–11 (MDAKTDDKDGG) are compositionally biased toward basic and acidic residues. A disordered region spans residues 1-24 (MDAKTDDKDGGKCPFPHGGGRGRR). The tryptophyl-tyrosyl-methioninium (Trp-Tyr) (with M-245) cross-link spans 97–219 (WHSAGTYRTT…LGAVQMGLIY (123 aa)). His98 serves as the catalytic Proton acceptor. The segment at residues 219–245 (YVNPEGPNGNPDPVAAAKDIRETFARM) is a cross-link (tryptophyl-tyrosyl-methioninium (Tyr-Met) (with W-97)). His260 serves as a coordination point for heme b.

The protein belongs to the peroxidase family. Peroxidase/catalase subfamily. In terms of assembly, homodimer or homotetramer. It depends on heme b as a cofactor. Post-translationally, formation of the three residue Trp-Tyr-Met cross-link is important for the catalase, but not the peroxidase activity of the enzyme.

The enzyme catalyses H2O2 + AH2 = A + 2 H2O. It carries out the reaction 2 H2O2 = O2 + 2 H2O. In terms of biological role, bifunctional enzyme with both catalase and broad-spectrum peroxidase activity. This Rhodopseudomonas palustris (strain HaA2) protein is Catalase-peroxidase.